The chain runs to 258 residues: F-box/LRR-repeat protein 25 (258 aa).

The region spanning 27-76 is the F-box domain; that stretch reads SDSISNLPDEILHHILSFIPETNLVIRTSVLSKRWRHVWSKTPHLSFEWL. LRR repeat units follow at residues 101 to 130, 136 to 161, 177 to 202, and 224 to 249; these read CTSY…SLAF, CNKF…SLTP, RCNL…SLKF, and RRSC…RLRD.

In Arabidopsis thaliana (Mouse-ear cress), this protein is F-box/LRR-repeat protein 25 (FBL25).